The sequence spans 95 residues: Aspartyl/glutamyl-tRNA(Asn/Gln) amidotransferase subunit C (95 aa).

It belongs to the GatC family. As to quaternary structure, heterotrimer of A, B and C subunits.

It carries out the reaction L-glutamyl-tRNA(Gln) + L-glutamine + ATP + H2O = L-glutaminyl-tRNA(Gln) + L-glutamate + ADP + phosphate + H(+). It catalyses the reaction L-aspartyl-tRNA(Asn) + L-glutamine + ATP + H2O = L-asparaginyl-tRNA(Asn) + L-glutamate + ADP + phosphate + 2 H(+). Functionally, allows the formation of correctly charged Asn-tRNA(Asn) or Gln-tRNA(Gln) through the transamidation of misacylated Asp-tRNA(Asn) or Glu-tRNA(Gln) in organisms which lack either or both of asparaginyl-tRNA or glutaminyl-tRNA synthetases. The reaction takes place in the presence of glutamine and ATP through an activated phospho-Asp-tRNA(Asn) or phospho-Glu-tRNA(Gln). The sequence is that of Aspartyl/glutamyl-tRNA(Asn/Gln) amidotransferase subunit C from Ruegeria pomeroyi (strain ATCC 700808 / DSM 15171 / DSS-3) (Silicibacter pomeroyi).